Here is a 237-residue protein sequence, read N- to C-terminus: 7-cyano-7-deazaguanine synthase (237 aa).

14 to 24 contacts ATP; that stretch reads FSGGQDSATCL. The Zn(2+) site is built by C202, C217, C220, and C223.

The protein belongs to the QueC family. It depends on Zn(2+) as a cofactor.

It catalyses the reaction 7-carboxy-7-deazaguanine + NH4(+) + ATP = 7-cyano-7-deazaguanine + ADP + phosphate + H2O + H(+). Its pathway is purine metabolism; 7-cyano-7-deazaguanine biosynthesis. In terms of biological role, catalyzes the ATP-dependent conversion of 7-carboxy-7-deazaguanine (CDG) to 7-cyano-7-deazaguanine (preQ(0)). The chain is 7-cyano-7-deazaguanine synthase from Rhodopseudomonas palustris (strain ATCC BAA-98 / CGA009).